The primary structure comprises 413 residues: Elongation factor 1-alpha (413 aa).

The tr-type G domain maps to 5 to 211 (KTHMNLAFIG…DALDEPDKPV (207 aa)). The segment at 14 to 21 (GHVDHGKS) is G1. 14 to 21 (GHVDHGKS) is a GTP binding site. Residue serine 21 coordinates Mg(2+). The interval 60–64 (GVTID) is G2. Positions 81-84 (DCPG) are G3. Residues 81 to 85 (DCPGH) and 136 to 139 (NKMD) each bind GTP. The segment at 136 to 139 (NKMD) is G4. Positions 175–177 (SAF) are G5.

It belongs to the TRAFAC class translation factor GTPase superfamily. Classic translation factor GTPase family. EF-Tu/EF-1A subfamily.

The protein localises to the cytoplasm. The catalysed reaction is GTP + H2O = GDP + phosphate + H(+). Its function is as follows. GTP hydrolase that promotes the GTP-dependent binding of aminoacyl-tRNA to the A-site of ribosomes during protein biosynthesis. The sequence is that of Elongation factor 1-alpha from Methanosphaera stadtmanae (strain ATCC 43021 / DSM 3091 / JCM 11832 / MCB-3).